Reading from the N-terminus, the 440-residue chain is Probable cytosolic iron-sulfur protein assembly protein 1 (440 aa).

WD repeat units follow at residues 12 to 51, 71 to 110, 148 to 187, 193 to 233, 278 to 317, 326 to 379, and 401 to 440; these read AHAEPAWTVSFNPTRSLLASCSTDRTIRLYSYIIPSSSDG, DHKRTVRSIAWSPDGRTLASGSFDSTVGVWEEVIPLSDDE, GHESECKSVGFSSDGALLASCSRDKSVWVWEVQPDADFEC, EHSQ…WCIF, EEDETVWCLAWSPDGRWLASGGDNGGIRLWQRTGSQPDSA, AHSR…SPSS, and HGVNDINSVAWCVREDKKGWGMLSSAGDDGSVKVWRVVRD. Over residues 107–116 the composition is skewed to acidic residues; sequence SDDEEEEDEG. The interval 107-137 is disordered; that stretch reads SDDEEEEDEGAQGVYKPAGVDSDGDGDGGKE.

Belongs to the WD repeat CIA1 family.

Essential component of the cytosolic iron-sulfur (Fe/S) protein assembly machinery. Required for the maturation of extramitochondrial Fe/S proteins. In Cryptococcus neoformans var. neoformans serotype D (strain B-3501A) (Filobasidiella neoformans), this protein is Probable cytosolic iron-sulfur protein assembly protein 1.